We begin with the raw amino-acid sequence, 423 residues long: tRNA(Ile2) 2-agmatinylcytidine synthetase TiaS (423 aa).

Positions valine 273 to leucine 347 form a DNA-binding region, OB.

The protein belongs to the TiaS family.

Its subcellular location is the cytoplasm. The enzyme catalyses cytidine(34) in tRNA(Ile2) + agmatine + ATP + H2O = 2-agmatinylcytidine(34) in tRNA(Ile2) + AMP + 2 phosphate + 2 H(+). Its function is as follows. ATP-dependent agmatine transferase that catalyzes the formation of 2-agmatinylcytidine (agm2C) at the wobble position (C34) of tRNA(Ile2), converting the codon specificity from AUG to AUA. The chain is tRNA(Ile2) 2-agmatinylcytidine synthetase TiaS from Methanocaldococcus jannaschii (strain ATCC 43067 / DSM 2661 / JAL-1 / JCM 10045 / NBRC 100440) (Methanococcus jannaschii).